A 359-amino-acid polypeptide reads, in one-letter code: DNA polymerase IV (359 aa).

Positions 4–185 (IIHIDMDCYF…LSLRKIPGVG (182 aa)) constitute a UmuC domain. The Mg(2+) site is built by D8 and D103. The active site involves E104.

It belongs to the DNA polymerase type-Y family. As to quaternary structure, monomer. Mg(2+) is required as a cofactor.

It is found in the cytoplasm. It catalyses the reaction DNA(n) + a 2'-deoxyribonucleoside 5'-triphosphate = DNA(n+1) + diphosphate. In terms of biological role, poorly processive, error-prone DNA polymerase involved in untargeted mutagenesis. Copies undamaged DNA at stalled replication forks, which arise in vivo from mismatched or misaligned primer ends. These misaligned primers can be extended by PolIV. Exhibits no 3'-5' exonuclease (proofreading) activity. May be involved in translesional synthesis, in conjunction with the beta clamp from PolIII. The chain is DNA polymerase IV from Shewanella sp. (strain MR-4).